A 392-amino-acid chain; its full sequence is Elongation factor Tu-3 (392 aa).

In terms of domain architecture, tr-type G spans 10–206; it reads KPHLNIGTMG…AVDTYVPMPE (197 aa). The segment at 19-26 is G1; that stretch reads GHVDHGKT. 19-26 is a GTP binding site; that stretch reads GHVDHGKT. A Mg(2+)-binding site is contributed by Thr26. A G2 region spans residues 63 to 67; the sequence is GITIN. The G3 stretch occupies residues 84–87; sequence DMPG. GTP is bound by residues 84–88 and 139–142; these read DMPGH and NKAD. The interval 139-142 is G4; that stretch reads NKAD. Residues 176–178 are G5; that stretch reads SGL.

This sequence belongs to the TRAFAC class translation factor GTPase superfamily. Classic translation factor GTPase family. EF-Tu/EF-1A subfamily. Monomer.

The protein localises to the cytoplasm. The catalysed reaction is GTP + H2O = GDP + phosphate + H(+). GTP hydrolase that promotes the GTP-dependent binding of aminoacyl-tRNA to the A-site of ribosomes during protein biosynthesis. In Streptomyces coelicolor (strain ATCC BAA-471 / A3(2) / M145), this protein is Elongation factor Tu-3.